The following is a 241-amino-acid chain: Adapter protein MecA (241 aa).

A disordered region spans residues 77-102 (KNTDEDDVADESQGDASVDSEHPDQV). Residues 80 to 89 (DEDDVADESQ) are compositionally biased toward acidic residues.

This sequence belongs to the MecA family. As to quaternary structure, homodimer.

Functionally, enables the recognition and targeting of unfolded and aggregated proteins to the ClpC protease or to other proteins involved in proteolysis. The sequence is that of Adapter protein MecA from Levilactobacillus brevis (strain ATCC 367 / BCRC 12310 / CIP 105137 / JCM 1170 / LMG 11437 / NCIMB 947 / NCTC 947) (Lactobacillus brevis).